The primary structure comprises 224 residues: MPWSPLAALSWALVLRLLALLWPPGRGEACSCAPAHPQQHFCHSALVIRAKISSEKVVPASKDPADTQKLIRYEIKQIKMFKGFEKAKDIQYVYTPFDSSLCGVKLETNSHKQYLLTGQILSDGKVFIHLCNYIEPWEDLSLVQRESLNHHYHQNCGCQITTCYAVPCTISAPNECLWTDWLLERKLYGYQAQHYVCMKHVDGICSWYRGHLHLRKEYVDIIQP.

Residues 1–29 form the signal peptide; the sequence is MPWSPLAALSWALVLRLLALLWPPGRGEA. Cys30 lines the Zn(2+) pocket. 2 involved in metalloproteinase-binding regions span residues 30–33 and 99–100; these read CSCA and SS. 6 disulfide bridges follow: Cys30-Cys102, Cys32-Cys131, Cys42-Cys156, Cys158-Cys205, Cys163-Cys168, and Cys176-Cys197. The 127-residue stretch at 30–156 folds into the NTR domain; it reads CSCAPAHPQQ…SLNHHYHQNC (127 aa).

It belongs to the protease inhibitor I35 (TIMP) family. In terms of tissue distribution, expressed in brain, heart, ovary and skeletal muscle.

It localises to the secreted. Its function is as follows. Complexes with metalloproteinases (such as collagenases) and irreversibly inactivates them by binding to their catalytic zinc cofactor. The polypeptide is Metalloproteinase inhibitor 4 (Timp4) (Mus musculus (Mouse)).